A 149-amino-acid polypeptide reads, in one-letter code: Altered inheritance of mitochondria protein 11 (149 aa).

The next 2 helical transmembrane spans lie at 29-48 (MMRF…LAIT) and 79-101 (LVLA…CWIW).

The protein belongs to the AIM11 family.

The protein localises to the membrane. The polypeptide is Altered inheritance of mitochondria protein 11 (AIM11) (Vanderwaltozyma polyspora (strain ATCC 22028 / DSM 70294 / BCRC 21397 / CBS 2163 / NBRC 10782 / NRRL Y-8283 / UCD 57-17) (Kluyveromyces polysporus)).